Consider the following 365-residue polypeptide: 4-hydroxy-tetrahydrodipicolinate synthase 1, chloroplastic (365 aa).

A chloroplast-targeting transit peptide spans 1–39 (MSALKNYGLISIDSALHFPRSNQLQSYKRRNAKWVSPIA). Position 108 (Thr108) interacts with pyruvate. The active-site Proton donor/acceptor is the Tyr194. The Schiff-base intermediate with substrate role is filled by Lys222. Ile261 contacts pyruvate.

This sequence belongs to the DapA family.

It localises to the plastid. It is found in the chloroplast. The enzyme catalyses L-aspartate 4-semialdehyde + pyruvate = (2S,4S)-4-hydroxy-2,3,4,5-tetrahydrodipicolinate + H2O + H(+). It functions in the pathway amino-acid biosynthesis; L-lysine biosynthesis via DAP pathway; (S)-tetrahydrodipicolinate from L-aspartate: step 3/4. Functionally, catalyzes the condensation of (S)-aspartate-beta-semialdehyde [(S)-ASA] and pyruvate to 4-hydroxy-tetrahydrodipicolinate (HTPA). This Arabidopsis thaliana (Mouse-ear cress) protein is 4-hydroxy-tetrahydrodipicolinate synthase 1, chloroplastic (DHDPS1).